The sequence spans 189 residues: RxLR effector protein CRE18 (189 aa).

Positions 1-23 (MSKLFYAFAVLAVHVLTSSPTTA) are cleaved as a signal peptide. Positions 47–68 (RFLRSIHEGEDSLKPSAFSEER) match the RxLR-dEER motif.

The protein belongs to the RxLR effector family.

The protein localises to the secreted. Its subcellular location is the host cytoplasm. It localises to the host nucleus. In terms of biological role, effector that is involved in host plant infection. Contributes to virulence during the early infection stage, by inhibiting plant defense responses induced by both PAMP-triggered immunity (PTI) and effector-triggered immunity (ETI). This chain is RxLR effector protein CRE18, found in Phytophthora infestans (strain T30-4) (Potato late blight agent).